A 206-amino-acid chain; its full sequence is MTFNICVLISGNGTNLQAIIDAIESKYLNVCIKVVISNKETAYGLERAKKASIETRVFSLQKYLKQDPINNTRSTYGLELAKIIREYSSIDLIVLAGWMIILPATFLKEFTDNKPTIDIINLHPALPGQYPGAHAIERAFNDFKENKIKHSGIMIHKVIEEVDAGEVILTKEIPILPTDTLESLEERFHQQEHKSLVESIKLLSTK.

A N(1)-(5-phospho-beta-D-ribosyl)glycinamide-binding site is contributed by 13–15; the sequence is GTN. (6R)-10-formyltetrahydrofolate is bound by residues 99 to 102 and Asn121; that span reads MIIL. His123 acts as the Proton donor in catalysis. Asp163 is a (6R)-10-formyltetrahydrofolate binding site. N(1)-(5-phospho-beta-D-ribosyl)glycinamide is bound at residue Glu192.

It belongs to the GART family.

The enzyme catalyses N(1)-(5-phospho-beta-D-ribosyl)glycinamide + (6R)-10-formyltetrahydrofolate = N(2)-formyl-N(1)-(5-phospho-beta-D-ribosyl)glycinamide + (6S)-5,6,7,8-tetrahydrofolate + H(+). The protein operates within purine metabolism; IMP biosynthesis via de novo pathway; N(2)-formyl-N(1)-(5-phospho-D-ribosyl)glycinamide from N(1)-(5-phospho-D-ribosyl)glycinamide (10-formyl THF route): step 1/1. This Dictyostelium discoideum (Social amoeba) protein is Phosphoribosylglycinamide formyltransferase (purN).